The primary structure comprises 447 residues: MEAKNITIDNTTYNFFKFYNINQPLTNLKYLNSERLCFSNAVMGKIVDDASTITITYHRVYFGISGPKPRQVADLGEYYDVNELLNYDTYTKTQEFAQKYNSLVKPTIDAKNWSGNELVLLVGNEWYCKTFGKAGSKNVFLYNMIPTIYRDEPQHQEQILKKFMFFNATKNVEQNPNFLDNVPEEYYHLLLPKSWVEKNLSDKYRKIMETEHKPLVFSCEPAFSFGLCRNTQDKNESYQLSLCLYEREKPRDAEIVWAAKYDELAAMVRDYLKKTPEFKKYRSFISCMKGLSWKNNEIGDKDGPKLYPKVIFNRKKGEFVTIFTKDDDVEPETIEDPRTILDRRCVVQAALRLESVFVHNKVAIQLRINDVLISEWKEASSKPQPLILRRHRFTKPSSSVAKSTSPSLRNSGSDESDLNQSDSDKEDERVVPVPKTKRIVKTVKLPN.

Positions 392-435 (RFTKPSSSVAKSTSPSLRNSGSDESDLNQSDSDKEDERVVPVPK) are disordered. Residues 395–407 (KPSSSVAKSTSPS) show a composition bias toward low complexity. A compositionally biased stretch (polar residues) spans 408–421 (LRNSGSDESDLNQS).

This is an uncharacterized protein from Invertebrate iridescent virus 3 (IIV-3).